The sequence spans 139 residues: Actin-depolymerizing factor 1 (139 aa).

The ADF-H domain occupies 5-139; that stretch reads ASGMAVHDDC…GLDVIQSRAN (135 aa).

The protein belongs to the actin-binding proteins ADF family.

Actin-depolymerizing protein. Severs actin filaments (F-actin) and binds to actin monomers. This chain is Actin-depolymerizing factor 1 (ADF1), found in Petunia hybrida (Petunia).